The primary structure comprises 596 residues: Selenocysteine-specific elongation factor (596 aa).

Residues arginine 5–threonine 217 form the tr-type G domain. The G1 stretch occupies residues glycine 14 to threonine 21. Glycine 19, threonine 21, and alanine 22 together coordinate GDP. GTP contacts are provided by glycine 19, threonine 21, and alanine 22. Threonine 21 is a Mg(2+) binding site. A G2 region spans residues glycine 46 to aspartate 50. Threonine 48 and aspartate 92 together coordinate Mg(2+). A G3 region spans residues aspartate 92–glycine 95. The segment at asparagine 146 to aspartate 149 is G4. Residues aspartate 149 and lysine 187 each contribute to the GDP site. Residues aspartate 149 and lysine 187 each coordinate GTP. The tract at residues alanine 185–lysine 187 is G5. The residue at position 537 (serine 537) is a Phosphoserine. Threonine 545 is modified (phosphothreonine). Residues alanine 547–arginine 553 carry the Nuclear localization signal motif. The interval leucine 548–glutamine 573 is disordered. Residues glycine 555 to proline 571 are compositionally biased toward basic and acidic residues. At arginine 556 the chain carries Omega-N-methylarginine.

It belongs to the TRAFAC class translation factor GTPase superfamily. Classic translation factor GTPase family. SelB subfamily. Mg(2+) is required as a cofactor. It depends on Mn(2+) as a cofactor.

The protein resides in the cytoplasm. It is found in the nucleus. It catalyses the reaction GTP + H2O = GDP + phosphate + H(+). Translation factor required for the incorporation of the rare amino acid selenocysteine encoded by UGA codons. Replaces the eRF1-eRF3-GTP ternary complex for the insertion of selenocysteine directed by the UGA codon. Insertion of selenocysteine at UGA codons is mediated by SECISBP2 and EEFSEC: SECISBP2 (1) specifically binds the SECIS sequence once the 80S ribosome encounters an in-frame UGA codon and (2) contacts the RPS27A/eS31 of the 40S ribosome before ribosome stalling. (3) GTP-bound EEFSEC then delivers selenocysteinyl-tRNA(Sec) to the 80S ribosome and adopts a preaccommodated state conformation. (4) After GTP hydrolysis, EEFSEC dissociates from the assembly, selenocysteinyl-tRNA(Sec) accommodates, and peptide bond synthesis and selenoprotein elongation occur. The polypeptide is Selenocysteine-specific elongation factor (Homo sapiens (Human)).